Reading from the N-terminus, the 57-residue chain is Sperm histone (57 aa).

A disordered region spans residues 1–57 (MARYRRTRTRSRSRRRRRSRRRRSSRRRRYGRSRRSYRSVGRRRRRYGRRRRRRRRY). A Phosphothreonine modification is found at threonine 9.

This sequence belongs to the protamine P1 family. As to expression, testis.

It localises to the nucleus. Its subcellular location is the chromosome. Its function is as follows. Protamines substitute for histones in the chromatin of sperm during the haploid phase of spermatogenesis. They compact sperm DNA into a highly condensed, stable and inactive complex. The protein is Sperm histone of Coturnix japonica (Japanese quail).